The following is a 745-amino-acid chain: Dipeptidyl aminopeptidase 4 (745 aa).

The signal sequence occupies residues 1–22 (MRLALFALFALMTVATALPAHA). Residues Glu208 and Glu209 each contribute to the substrate site. Active-site charge relay system residues include Ser613, Asp689, and His721.

It belongs to the peptidase S9B family. Homodimer.

Its subcellular location is the cytoplasm. It localises to the periplasm. It carries out the reaction Release of an N-terminal dipeptide, Xaa-Yaa-|-Zaa-, from a polypeptide, preferentially when Yaa is Pro, provided Zaa is neither Pro nor hydroxyproline.. Its activity is regulated as follows. Completely inhibited by the serine protease inhibitor diisopropyl fluorophosphate (DFP) and moderately by N-tosyl-L-phenyl-alanyl chloromethyl ketone (TPCK). Somewhat inhibited by phenylmethanesulfonyl fluoride (PMSF). Activity is not affected by thiol- or metalloprotease inhibitors, such as iodoacetate (IAA), EDTA, N-tosyl-L-lysyl chloromethyl ketone (TLCK), o-phenanthlorine, N-ethylmaleimide (NEM) or dithiothreitol (DTT). Functionally, catalyzes the sequential release of Tyr-Pro, Phe-Pro and Gly-Pro from the N-terminus of peptides and proteins. Is able to cleaves bioactive peptide beta-casomorphin. This is Dipeptidyl aminopeptidase 4 from Pseudoxanthomonas mexicana.